Reading from the N-terminus, the 141-residue chain is Regulator of ribonuclease activity B (141 aa).

The tract at residues 112–141 is disordered; the sequence is GTYFEDPNAPDDEDDNDDLFPPEEDEPRLH. The span at 119 to 141 shows a compositional bias: acidic residues; it reads NAPDDEDDNDDLFPPEEDEPRLH.

This sequence belongs to the RraB family. In terms of assembly, interacts with the C-terminal region of Rne.

It localises to the cytoplasm. Its function is as follows. Globally modulates RNA abundance by binding to RNase E (Rne) and regulating its endonucleolytic activity. Can modulate Rne action in a substrate-dependent manner by altering the composition of the degradosome. The polypeptide is Regulator of ribonuclease activity B (Xenorhabdus nematophila (strain ATCC 19061 / DSM 3370 / CCUG 14189 / LMG 1036 / NCIMB 9965 / AN6)).